A 497-amino-acid chain; its full sequence is Guanosine-5'-triphosphate,3'-diphosphate pyrophosphatase (497 aa).

The protein belongs to the GppA/Ppx family. GppA subfamily.

The enzyme catalyses guanosine 3'-diphosphate 5'-triphosphate + H2O = guanosine 3',5'-bis(diphosphate) + phosphate + H(+). The protein operates within purine metabolism; ppGpp biosynthesis; ppGpp from GTP: step 2/2. Functionally, catalyzes the conversion of pppGpp to ppGpp. Guanosine pentaphosphate (pppGpp) is a cytoplasmic signaling molecule which together with ppGpp controls the 'stringent response', an adaptive process that allows bacteria to respond to amino acid starvation, resulting in the coordinated regulation of numerous cellular activities. This chain is Guanosine-5'-triphosphate,3'-diphosphate pyrophosphatase, found in Aliivibrio fischeri (strain MJ11) (Vibrio fischeri).